Here is a 169-residue protein sequence, read N- to C-terminus: Peptide methionine sulfoxide reductase MsrA (169 aa).

Residue Cys-13 is part of the active site.

The protein belongs to the MsrA Met sulfoxide reductase family.

It carries out the reaction L-methionyl-[protein] + [thioredoxin]-disulfide + H2O = L-methionyl-(S)-S-oxide-[protein] + [thioredoxin]-dithiol. The catalysed reaction is [thioredoxin]-disulfide + L-methionine + H2O = L-methionine (S)-S-oxide + [thioredoxin]-dithiol. In terms of biological role, has an important function as a repair enzyme for proteins that have been inactivated by oxidation. Catalyzes the reversible oxidation-reduction of methionine sulfoxide in proteins to methionine. The protein is Peptide methionine sulfoxide reductase MsrA of Mycolicibacterium vanbaalenii (strain DSM 7251 / JCM 13017 / BCRC 16820 / KCTC 9966 / NRRL B-24157 / PYR-1) (Mycobacterium vanbaalenii).